A 71-amino-acid polypeptide reads, in one-letter code: Protein PSY2 (71 aa).

The N-terminal stretch at 1–20 (MSFGTRLLLFLILTLPLVTS) is a signal peptide. Residues 21–46 (SSPNTLHVSGIVKTGTTSRFLMMTIE) constitute a propeptide that is removed on maturation. Tyr48 bears the Sulfotyrosine mark. A disordered region spans residues 50-71 (DPSANTRHDPSVPTNAKADTTP). Positions 61 to 71 (VPTNAKADTTP) are enriched in polar residues. The residue at position 62 (Pro62) is a 4-hydroxyproline. Pro62 carries an O-linked (Ara...) hydroxyproline glycan. Residues 65 to 71 (AKADTTP) constitute a propeptide that is removed on maturation.

The protein belongs to the sulfated-peptide plant hormone family. In terms of processing, the sulfation and the glycosylation are required for full activity.

It localises to the secreted. Promotes cellular proliferation and expansion. This is Protein PSY2 (PSY2) from Arabidopsis thaliana (Mouse-ear cress).